Reading from the N-terminus, the 744-residue chain is Collagen alpha-1(VIII) chain (744 aa).

A signal peptide spans 1 to 27; the sequence is MAVLPGPLQLLGVLLTISLSSIRLIQA. Positions 29 to 117 are nonhelical region (NC2); that stretch reads AYYGIKPLPP…GKEIPLASLR (89 aa). Disordered regions lie at residues 115-393 and 459-589; these read SLRG…GEPG and GPKG…PDMG. The triple-helical region (COL1) stretch occupies residues 118–571; sequence GEQGPRGEPG…PGPPGPPGPP (454 aa). A compositionally biased stretch (pro residues) spans 128–137; it reads PRGPPGPPGL. Over residues 168 to 178 the composition is skewed to low complexity; sequence KPGAMGMPGAK. 2 stretches are compositionally biased toward gly residues: residues 203 to 217 and 328 to 337; these read GLPG…GLPG and GFPGGKGEQG. Composition is skewed to low complexity over residues 466–496 and 538–556; these read QKGV…LQGP and AGLH…QGQP. A compositionally biased stretch (pro residues) spans 558 to 581; it reads LPGPPGPPGPPGPPAVMPPTPPPQ. A nonhelical region (NC1) region spans residues 572–744; that stretch reads AVMPPTPPPQ…SFSGYLLYPM (173 aa). Residues 611-744 form the C1q domain; the sequence is PAYEMPAFTA…SFSGYLLYPM (134 aa).

Homotrimers, or heterotrimers in association with alpha 2(VIII) type collagens. Four homotrimers can form a tetrahedron stabilized by central interacting C-terminal NC1 trimers. Prolines at the third position of the tripeptide repeating unit (G-X-Y) are hydroxylated in some or all of the chains. Post-translationally, proteolytically cleaved by neutrophil elastase, in vitro. Proteolytic processing produces the C-terminal NC1 domain fragment, vastatin. In terms of tissue distribution, expressed primarily in the subendothelium of large blood vessels. Also expressed in arterioles and venules in muscle, heart, kidney, spleen, umbilical cord, liver and lung and is also found in connective tissue layers around hair follicles, around nerve bundles in muscle, in the dura of the optic nerve, in cornea and sclera, and in the perichondrium of cartilaginous tissues. In the kidney, expressed in mesangial cells, glomerular endothelial cells, and tubular epithelial cells. Also expressed in mast cells, and in astrocytes during the repair process. Expressed in Descemet's membrane. Specifically expressed in peritoneal fibroblasts and mesothelial cells.

It is found in the secreted. Its subcellular location is the extracellular space. The protein localises to the extracellular matrix. The protein resides in the basement membrane. Functionally, macromolecular component of the subendothelium. Major component of the Descemet's membrane (basement membrane) of corneal endothelial cells. Also a component of the endothelia of blood vessels. Necessary for migration and proliferation of vascular smooth muscle cells and thus, has a potential role in the maintenance of vessel wall integrity and structure, in particular in atherogenesis. Vastatin, the C-terminal fragment comprising the NC1 domain, inhibits aortic endothelial cell proliferation and causes cell apoptosis. The polypeptide is Collagen alpha-1(VIII) chain (COL8A1) (Homo sapiens (Human)).